We begin with the raw amino-acid sequence, 542 residues long: MFS thioclapurine efflux transporter tcpA (542 aa).

Residues 1–10 (MATVGTEEKN) are compositionally biased toward basic and acidic residues. The interval 1–24 (MATVGTEEKNPIGSASNTAEPNVT) is disordered. The segment covering 13–24 (GSASNTAEPNVT) has biased composition (polar residues). An N-linked (GlcNAc...) asparagine glycan is attached at Asn22. 3 helical membrane-spanning segments follow: residues 32–52 (SGFK…LCGL), 75–97 (GWYT…KLYT), and 103–123 (MILL…AAAP). Asn124 carries an N-linked (GlcNAc...) asparagine glycan. The next 6 membrane-spanning stretches (helical) occupy residues 133–153 (AIAG…LVHA), 161–181 (ALLG…PFIG), 193–213 (CFII…FFVF), 234–254 (IPEI…LQWG), 265–285 (IIAL…LQVL), and 307–327 (IFAL…PIYF). N-linked (GlcNAc...) asparagine glycosylation occurs at Asn332. A helical membrane pass occupies residues 339 to 359 (GVNVMPLILGFLVMSIISGVI). The N-linked (GlcNAc...) asparagine glycan is linked to Asn361. 4 consecutive transmembrane segments (helical) span residues 370 to 390 (MFLC…FDVG), 396 to 416 (WIGY…QPIV), 427 to 447 (VPFG…IFVA), and 500 to 520 (VLGQ…LGSL).

The protein belongs to the major facilitator superfamily.

Its subcellular location is the cell membrane. Functionally, MFS efflux transporter probably involved in thioclapurine export. This chain is MFS thioclapurine efflux transporter tcpA, found in Claviceps purpurea (strain 20.1) (Ergot fungus).